We begin with the raw amino-acid sequence, 41 residues long: Tachystatin-C (41 aa).

3 cysteine pairs are disulfide-bonded: C12–C28, C19–C33, and C27–C38.

Granular hemocytes, small secretory granules.

Its subcellular location is the secreted. Its function is as follows. Binds to chitin. Shows strong activity against E.coli (IC(50) is 1.2 ug/ml). Is also very active against S.aureus (IC(50) is 0.8 ug/ml), C.albicans (IC(50) is 0.9 ug/ml) and P.pastoris (IC(50) is 0.3 ug/ml). Binds to chitin (5.2 uM are required to obtain 50% of binding). Causes hemolysis on sheep erythrocytes, probably by forming ion-permeable pores. The protein is Tachystatin-C of Tachypleus tridentatus (Japanese horseshoe crab).